The primary structure comprises 373 residues: DNA replication and repair protein RecF (373 aa).

Residue 30-37 participates in ATP binding; it reads GDNAQGKT.

This sequence belongs to the RecF family.

It localises to the cytoplasm. In terms of biological role, the RecF protein is involved in DNA metabolism; it is required for DNA replication and normal SOS inducibility. RecF binds preferentially to single-stranded, linear DNA. It also seems to bind ATP. This is DNA replication and repair protein RecF from Oenococcus oeni (strain ATCC BAA-331 / PSU-1).